The sequence spans 419 residues: Serine hydroxymethyltransferase (419 aa).

Residues Leu-121 and 125–127 (GHL) each bind (6S)-5,6,7,8-tetrahydrofolate. Lys-229 is modified (N6-(pyridoxal phosphate)lysine). 354 to 356 (SPF) contacts (6S)-5,6,7,8-tetrahydrofolate.

Belongs to the SHMT family. In terms of assembly, homodimer. Pyridoxal 5'-phosphate serves as cofactor.

It localises to the cytoplasm. The catalysed reaction is (6R)-5,10-methylene-5,6,7,8-tetrahydrofolate + glycine + H2O = (6S)-5,6,7,8-tetrahydrofolate + L-serine. Its pathway is one-carbon metabolism; tetrahydrofolate interconversion. It functions in the pathway amino-acid biosynthesis; glycine biosynthesis; glycine from L-serine: step 1/1. Functionally, catalyzes the reversible interconversion of serine and glycine with tetrahydrofolate (THF) serving as the one-carbon carrier. This reaction serves as the major source of one-carbon groups required for the biosynthesis of purines, thymidylate, methionine, and other important biomolecules. Also exhibits THF-independent aldolase activity toward beta-hydroxyamino acids, producing glycine and aldehydes, via a retro-aldol mechanism. The protein is Serine hydroxymethyltransferase of Coxiella burnetii (strain CbuG_Q212) (Coxiella burnetii (strain Q212)).